Consider the following 397-residue polypeptide: 8-amino-7-oxononanoate synthase (397 aa).

Arg21 provides a ligand contact to substrate. A pyridoxal 5'-phosphate-binding site is contributed by Gly110 to Tyr111. His135 provides a ligand contact to substrate. Pyridoxal 5'-phosphate-binding residues include Ser181, His209, and Thr238. Lys241 carries the post-translational modification N6-(pyridoxal phosphate)lysine. Thr355 is a substrate binding site.

The protein belongs to the class-II pyridoxal-phosphate-dependent aminotransferase family. BioF subfamily. Homodimer. Pyridoxal 5'-phosphate serves as cofactor.

It catalyses the reaction 6-carboxyhexanoyl-[ACP] + L-alanine + H(+) = (8S)-8-amino-7-oxononanoate + holo-[ACP] + CO2. It functions in the pathway cofactor biosynthesis; biotin biosynthesis. Catalyzes the decarboxylative condensation of pimeloyl-[acyl-carrier protein] and L-alanine to produce 8-amino-7-oxononanoate (AON), [acyl-carrier protein], and carbon dioxide. The chain is 8-amino-7-oxononanoate synthase from Saccharophagus degradans (strain 2-40 / ATCC 43961 / DSM 17024).